The following is a 544-amino-acid chain: Chaperonin GroEL 2 (544 aa).

ATP contacts are provided by residues 29–32, 86–90, Gly413, 479–481, and Asp495; these read TLGP, DGTTT, and NAA.

This sequence belongs to the chaperonin (HSP60) family. In terms of assembly, forms a cylinder of 14 subunits composed of two heptameric rings stacked back-to-back. Interacts with the co-chaperonin GroES.

The protein localises to the cytoplasm. It carries out the reaction ATP + H2O + a folded polypeptide = ADP + phosphate + an unfolded polypeptide.. In terms of biological role, together with its co-chaperonin GroES, plays an essential role in assisting protein folding. The GroEL-GroES system forms a nano-cage that allows encapsulation of the non-native substrate proteins and provides a physical environment optimized to promote and accelerate protein folding. The protein is Chaperonin GroEL 2 of Trichodesmium erythraeum (strain IMS101).